Reading from the N-terminus, the 254-residue chain is Type III pantothenate kinase (254 aa).

An ATP-binding site is contributed by 6 to 13 (DVGNTNTT). Substrate-binding positions include tyrosine 100 and 107–110 (GADR). Aspartate 109 functions as the Proton acceptor in the catalytic mechanism. A K(+)-binding site is contributed by aspartate 129. Threonine 132 is a binding site for ATP. Threonine 184 lines the substrate pocket.

The protein belongs to the type III pantothenate kinase family. As to quaternary structure, homodimer. NH4(+) is required as a cofactor. Requires K(+) as cofactor.

It is found in the cytoplasm. It catalyses the reaction (R)-pantothenate + ATP = (R)-4'-phosphopantothenate + ADP + H(+). Its pathway is cofactor biosynthesis; coenzyme A biosynthesis; CoA from (R)-pantothenate: step 1/5. Catalyzes the phosphorylation of pantothenate (Pan), the first step in CoA biosynthesis. The chain is Type III pantothenate kinase from Anaeromyxobacter dehalogenans (strain 2CP-1 / ATCC BAA-258).